The chain runs to 397 residues: Odorant receptor 22b (397 aa).

Residues 1-49 are Cytoplasmic-facing; the sequence is MLSQFFPHIKEKPLSERVKSRDAFVYLDRVMWSFGWTVPENKRWDLHYK. A helical transmembrane segment spans residues 50 to 70; that stretch reads LWSTFVTLLIFILLPISVSVE. Residues 71 to 85 are Extracellular-facing; that stretch reads YIQRFKTFSAGEFLS. The chain crosses the membrane as a helical span at residues 86-105; the sequence is SIQIGVNMYGSSFKSYLTMM. Topologically, residues 106–143 are cytoplasmic; that stretch reads GYKKRQEAKMSLDELDKRCVCDEERTIVHRHVALGNFC. A helical membrane pass occupies residues 144–164; the sequence is YIFYHIAYTSFLISNFLSFIM. Residues 165–194 are Extracellular-facing; it reads KRIHAWRMYFPYVDPEKQFYISSIAEVILR. Residues 195–215 form a helical membrane-spanning segment; it reads GWAVFMDLCTDVCPLISMVIA. The Cytoplasmic segment spans residues 216-268; that stretch reads RCHITLLKQRLRNLRSEPGRTEDEYLKELADCVRDHRLILDYVDALRSVFSGT. Residues 269–289 form a helical membrane-spanning segment; it reads IFVQFLLIGIVLGLSMINIMF. Topologically, residues 290–295 are extracellular; it reads FSTLST. The helical transmembrane segment at 296–316 threads the bilayer; it reads GVAVVLFMSCVSMQTFPFCYL. At 317 to 347 the chain is on the cytoplasmic side; it reads CNMIMDDCQEMADSLFQSDWTSADRRYKSTL. A helical membrane pass occupies residues 348 to 368; it reads VYFLHNLQQPIILTAGGVFPI. Residues 369–397 are Extracellular-facing; it reads SMQTNLNMVKLAFTVVTIVKQFNLAEKFQ.

The protein belongs to the insect chemoreceptor superfamily. Heteromeric odorant receptor channel (TC 1.A.69) family. Or2a subfamily. As to quaternary structure, interacts with Orco, via conserved C-terminal cytoplasmic loops. Complexes exist early in the endomembrane system in olfactory sensory neurons (OSNs), coupling these complexes to the conserved ciliary trafficking pathway. Expressed with Orco in 20-22 sensory neurons on the medial-proximal edge of the antenna. This expression pattern matches the distribution of the large sensilla basiconica. Expression is first seen at 60 hours APF in a subset of cells restricted to a subregion of the developing antenna. Expression continues throughout antennal development. Expressed in the ab3A neuron which responds to ethyl butyrate.

The protein localises to the cell membrane. Its function is as follows. Odorant receptor which mediates acceptance or avoidance behavior, depending on its substrates. The odorant receptor repertoire encodes a large collection of odor stimuli that vary widely in identity, intensity, and duration. Involved in the behavioral responses to esters. Complexes with Orco to form odorant-sensing units, providing sensitive and prolonged odorant signaling and calcium permeability. They are necessary and sufficient to promote functional reconstitution of odor-evoked signaling in sensory neurons that normally respond only to carbon dioxide. The chain is Odorant receptor 22b (Or22b) from Drosophila melanogaster (Fruit fly).